Here is a 189-residue protein sequence, read N- to C-terminus: Large ribosomal subunit protein uL5 (189 aa).

This sequence belongs to the universal ribosomal protein uL5 family. Part of the 50S ribosomal subunit; part of the 5S rRNA/L5/L18/L25 subcomplex. Contacts the 5S rRNA and the P site tRNA. Forms a bridge to the 30S subunit in the 70S ribosome.

Functionally, this is one of the proteins that bind and probably mediate the attachment of the 5S RNA into the large ribosomal subunit, where it forms part of the central protuberance. In the 70S ribosome it contacts protein S13 of the 30S subunit (bridge B1b), connecting the 2 subunits; this bridge is implicated in subunit movement. Contacts the P site tRNA; the 5S rRNA and some of its associated proteins might help stabilize positioning of ribosome-bound tRNAs. This chain is Large ribosomal subunit protein uL5, found in Parafrankia sp. (strain EAN1pec).